The primary structure comprises 90 residues: MSENTAERTTRRKVREGLVVSDKMNKTITVMVEDRVKHPLYGKVMTKSVRLKAHDENNEAGMGDRVRIMETRPLSATKRWRLVEIIEKAK.

Belongs to the universal ribosomal protein uS17 family. In terms of assembly, part of the 30S ribosomal subunit.

Its function is as follows. One of the primary rRNA binding proteins, it binds specifically to the 5'-end of 16S ribosomal RNA. This is Small ribosomal subunit protein uS17 from Cutibacterium acnes (strain DSM 16379 / KPA171202) (Propionibacterium acnes).